The sequence spans 436 residues: Adenylosuccinate synthetase (436 aa).

GTP is bound by residues 12 to 18 (GDEGKGK) and 40 to 42 (GHT). Catalysis depends on D13, which acts as the Proton acceptor. Residues D13 and G40 each contribute to the Mg(2+) site. IMP is bound by residues 13–16 (DEGK), 38–41 (NAGH), T128, R142, Q223, T238, and R302. H41 functions as the Proton donor in the catalytic mechanism. 298-304 (TTTGRRR) is a binding site for substrate. Residues R304, 330–332 (KLD), and 412–414 (SLG) contribute to the GTP site.

Belongs to the adenylosuccinate synthetase family. Homodimer. Mg(2+) serves as cofactor.

It localises to the cytoplasm. It catalyses the reaction IMP + L-aspartate + GTP = N(6)-(1,2-dicarboxyethyl)-AMP + GDP + phosphate + 2 H(+). Its pathway is purine metabolism; AMP biosynthesis via de novo pathway; AMP from IMP: step 1/2. In terms of biological role, plays an important role in the de novo pathway of purine nucleotide biosynthesis. Catalyzes the first committed step in the biosynthesis of AMP from IMP. This is Adenylosuccinate synthetase from Prochlorococcus marinus (strain MIT 9515).